The following is a 167-amino-acid chain: Mediator of RNA polymerase II transcription subunit 10 (167 aa).

The span at 141–158 shows a compositional bias: gly residues; that stretch reads TGGRTVGGEGEGAGQGEG. Positions 141–167 are disordered; the sequence is TGGRTVGGEGEGAGQGEGGEGRGEGGN.

The protein belongs to the Mediator complex subunit 10 family. As to quaternary structure, component of the Mediator complex.

The protein resides in the nucleus. Its function is as follows. Component of the Mediator complex, a coactivator involved in the regulated transcription of nearly all RNA polymerase II-dependent genes. Mediator functions as a bridge to convey information from gene-specific regulatory proteins to the basal RNA polymerase II transcription machinery. Mediator is recruited to promoters by direct interactions with regulatory proteins and serves as a scaffold for the assembly of a functional preinitiation complex with RNA polymerase II and the general transcription factors. This Chaetomium globosum (strain ATCC 6205 / CBS 148.51 / DSM 1962 / NBRC 6347 / NRRL 1970) (Soil fungus) protein is Mediator of RNA polymerase II transcription subunit 10 (NUT2).